Reading from the N-terminus, the 152-residue chain is Deoxyuridine 5'-triphosphate nucleotidohydrolase (152 aa).

Substrate contacts are provided by residues 71-73 (RSG), Asn84, 88-90 (LID), and Met98.

The protein belongs to the dUTPase family. Mg(2+) serves as cofactor.

The catalysed reaction is dUTP + H2O = dUMP + diphosphate + H(+). Its pathway is pyrimidine metabolism; dUMP biosynthesis; dUMP from dCTP (dUTP route): step 2/2. Its function is as follows. This enzyme is involved in nucleotide metabolism: it produces dUMP, the immediate precursor of thymidine nucleotides and it decreases the intracellular concentration of dUTP so that uracil cannot be incorporated into DNA. The chain is Deoxyuridine 5'-triphosphate nucleotidohydrolase from Shewanella putrefaciens (strain CN-32 / ATCC BAA-453).